Reading from the N-terminus, the 145-residue chain is MRAVVQRVDGASVVVEGENGPETVGEINGEGLCVLVGVTHDDTEEKAAQLARKLWSVRMLADEKSCSDIDAPLLVISQFTLYGDARKGRRPTWNAAAPGDVAEPLVDEVVARLRALGATVATGRFGAQMRVSLTNDGPFTVLIEN.

Residues 137-138 (GP) carry the Gly-cisPro motif, important for rejection of L-amino acids motif.

The protein belongs to the DTD family. As to quaternary structure, homodimer.

It is found in the cytoplasm. It carries out the reaction glycyl-tRNA(Ala) + H2O = tRNA(Ala) + glycine + H(+). The catalysed reaction is a D-aminoacyl-tRNA + H2O = a tRNA + a D-alpha-amino acid + H(+). Its function is as follows. An aminoacyl-tRNA editing enzyme that deacylates mischarged D-aminoacyl-tRNAs. Also deacylates mischarged glycyl-tRNA(Ala), protecting cells against glycine mischarging by AlaRS. Acts via tRNA-based rather than protein-based catalysis; rejects L-amino acids rather than detecting D-amino acids in the active site. By recycling D-aminoacyl-tRNA to D-amino acids and free tRNA molecules, this enzyme counteracts the toxicity associated with the formation of D-aminoacyl-tRNA entities in vivo and helps enforce protein L-homochirality. The chain is D-aminoacyl-tRNA deacylase from Streptomyces avermitilis (strain ATCC 31267 / DSM 46492 / JCM 5070 / NBRC 14893 / NCIMB 12804 / NRRL 8165 / MA-4680).